The following is a 199-amino-acid chain: Putative peroxiredoxin ycf42 (199 aa).

One can recognise a Thioredoxin domain in the interval 8–165 (LQVGQIAPDF…TLRVLQAIQY (158 aa)). The active-site Cysteine sulfenic acid (-SOH) intermediate is the Cys53.

Belongs to the peroxiredoxin family. AhpC/Prx1 subfamily. In terms of assembly, homodimer; disulfide-linked, upon oxidation. The Cys-53-SH group is the primary site of oxidation by H(2)O(2), and the oxidized Cys-53 (probably Cys-SOH) rapidly reacts with Cys-174-SH of the other subunit to form an intermolecular disulfide. This disulfide is subsequently reduced by thioredoxin.

It localises to the plastid. Its subcellular location is the chloroplast. The catalysed reaction is a hydroperoxide + [thioredoxin]-dithiol = an alcohol + [thioredoxin]-disulfide + H2O. In terms of biological role, thiol-specific peroxidase that catalyzes the reduction of hydrogen peroxide and organic hydroperoxides to water and alcohols, respectively. Plays a role in cell protection against oxidative stress by detoxifying peroxides. In Porphyra purpurea (Red seaweed), this protein is Putative peroxiredoxin ycf42 (ycf42).